Here is a 172-residue protein sequence, read N- to C-terminus: Small ribosomal subunit protein uS5 (172 aa).

An S5 DRBM domain is found at 13–76 (LIEKMVAVNR…DQARRSMIKV (64 aa)).

Belongs to the universal ribosomal protein uS5 family. In terms of assembly, part of the 30S ribosomal subunit. Contacts proteins S4 and S8.

Functionally, with S4 and S12 plays an important role in translational accuracy. In terms of biological role, located at the back of the 30S subunit body where it stabilizes the conformation of the head with respect to the body. The sequence is that of Small ribosomal subunit protein uS5 from Neisseria gonorrhoeae (strain ATCC 700825 / FA 1090).